We begin with the raw amino-acid sequence, 412 residues long: Proteasome-activating nucleotidase (412 aa).

Residues 15–73 (EDIYQYLLERITNLENRNLELREQFRQMESEKRYVETQKIRYERELRKLKSEIEQLRSP) are a coiled coil. ATP contacts are provided by residues 197 to 202 (GTGKTL) and His-336. The interval 410 to 412 (MFA) is docks into pockets in the proteasome alpha-ring to cause gate opening.

It belongs to the AAA ATPase family. Homohexamer. The hexameric complex has a two-ring architecture resembling a top hat that caps the 20S proteasome core at one or both ends. Upon ATP-binding, the C-terminus of PAN interacts with the alpha-rings of the proteasome core by binding to the intersubunit pockets.

Its subcellular location is the cytoplasm. Functionally, ATPase which is responsible for recognizing, binding, unfolding and translocation of substrate proteins into the archaeal 20S proteasome core particle. Is essential for opening the gate of the 20S proteasome via an interaction with its C-terminus, thereby allowing substrate entry and access to the site of proteolysis. Thus, the C-termini of the proteasomal ATPase function like a 'key in a lock' to induce gate opening and therefore regulate proteolysis. Unfolding activity requires energy from ATP hydrolysis, whereas ATP binding alone promotes ATPase-20S proteasome association which triggers gate opening, and supports translocation of unfolded substrates. The protein is Proteasome-activating nucleotidase of Methanoculleus marisnigri (strain ATCC 35101 / DSM 1498 / JR1).